A 108-amino-acid polypeptide reads, in one-letter code: Urease subunit beta (108 aa).

Belongs to the urease beta subunit family. As to quaternary structure, heterotrimer of UreA (gamma), UreB (beta) and UreC (alpha) subunits. Three heterotrimers associate to form the active enzyme.

It is found in the cytoplasm. The catalysed reaction is urea + 2 H2O + H(+) = hydrogencarbonate + 2 NH4(+). It functions in the pathway nitrogen metabolism; urea degradation; CO(2) and NH(3) from urea (urease route): step 1/1. The polypeptide is Urease subunit beta (Nocardia farcinica (strain IFM 10152)).